The primary structure comprises 469 residues: Ribulose bisphosphate carboxylase large chain (469 aa).

Position 8 is an N6,N6,N6-trimethyllysine (Lys-8). Residues Asn-117 and Thr-167 each contribute to the substrate site. The active-site Proton acceptor is the Lys-169. Residue Lys-171 coordinates substrate. Residues Lys-195, Asp-197, and Glu-198 each coordinate Mg(2+). An N6-carboxylysine modification is found at Lys-195. Residue His-288 is the Proton acceptor of the active site. Arg-289, His-321, and Ser-373 together coordinate substrate.

The protein belongs to the RuBisCO large chain family. Type I subfamily. As to quaternary structure, heterohexadecamer of 8 large chains and 8 small chains; disulfide-linked. The disulfide link is formed within the large subunit homodimers. The cofactor is Mg(2+). In terms of processing, the disulfide bond which can form in the large chain dimeric partners within the hexadecamer appears to be associated with oxidative stress and protein turnover.

It localises to the plastid. The protein resides in the chloroplast. It carries out the reaction 2 (2R)-3-phosphoglycerate + 2 H(+) = D-ribulose 1,5-bisphosphate + CO2 + H2O. It catalyses the reaction D-ribulose 1,5-bisphosphate + O2 = 2-phosphoglycolate + (2R)-3-phosphoglycerate + 2 H(+). In terms of biological role, ruBisCO catalyzes two reactions: the carboxylation of D-ribulose 1,5-bisphosphate, the primary event in carbon dioxide fixation, as well as the oxidative fragmentation of the pentose substrate in the photorespiration process. Both reactions occur simultaneously and in competition at the same active site. The sequence is that of Ribulose bisphosphate carboxylase large chain from Coleonema pulchellum (Confetti bush).